The following is a 93-amino-acid chain: MSLTETIEKKLIEAFHPERLEVINESHQHTGHQPGFDGTGESHMRVRIVSSAFAGMSRVARHRAINDLLKPELDAGLHALAVEPAAPGEPTRW.

Belongs to the BolA/IbaG family.

This is an uncharacterized protein from Sinorhizobium sp.